A 121-amino-acid chain; its full sequence is Large ribosomal subunit protein bL12 (121 aa).

This sequence belongs to the bacterial ribosomal protein bL12 family. As to quaternary structure, homodimer. Part of the ribosomal stalk of the 50S ribosomal subunit. Forms a multimeric L10(L12)X complex, where L10 forms an elongated spine to which 2 to 4 L12 dimers bind in a sequential fashion. Binds GTP-bound translation factors.

Forms part of the ribosomal stalk which helps the ribosome interact with GTP-bound translation factors. Is thus essential for accurate translation. The chain is Large ribosomal subunit protein bL12 from Salmonella agona (strain SL483).